Reading from the N-terminus, the 297-residue chain is Protoheme IX farnesyltransferase (297 aa).

A run of 9 helical transmembrane segments spans residues Val-26–Val-46, Tyr-48–Val-68, Leu-96–Phe-116, Leu-120–Leu-140, Asn-147–Thr-167, Ala-174–Leu-194, Leu-218–Tyr-238, Tyr-245–Ile-265, and Phe-276–Phe-296.

It belongs to the UbiA prenyltransferase family. Protoheme IX farnesyltransferase subfamily.

The protein localises to the cell inner membrane. It carries out the reaction heme b + (2E,6E)-farnesyl diphosphate + H2O = Fe(II)-heme o + diphosphate. The protein operates within porphyrin-containing compound metabolism; heme O biosynthesis; heme O from protoheme: step 1/1. Functionally, converts heme B (protoheme IX) to heme O by substitution of the vinyl group on carbon 2 of heme B porphyrin ring with a hydroxyethyl farnesyl side group. The chain is Protoheme IX farnesyltransferase from Polynucleobacter necessarius subsp. necessarius (strain STIR1).